The chain runs to 379 residues: Lipoyl synthase, mitochondrial (379 aa).

The [4Fe-4S] cluster site is built by Cys94, Cys99, Cys105, Cys126, Cys130, Cys133, and Ser342. The Radical SAM core domain occupies 109-331 (GEDNGAATAT…EKEAMSMGFL (223 aa)).

Belongs to the radical SAM superfamily. Lipoyl synthase family. [4Fe-4S] cluster serves as cofactor.

It localises to the mitochondrion. The catalysed reaction is [[Fe-S] cluster scaffold protein carrying a second [4Fe-4S](2+) cluster] + N(6)-octanoyl-L-lysyl-[protein] + 2 oxidized [2Fe-2S]-[ferredoxin] + 2 S-adenosyl-L-methionine + 4 H(+) = [[Fe-S] cluster scaffold protein] + N(6)-[(R)-dihydrolipoyl]-L-lysyl-[protein] + 4 Fe(3+) + 2 hydrogen sulfide + 2 5'-deoxyadenosine + 2 L-methionine + 2 reduced [2Fe-2S]-[ferredoxin]. The protein operates within protein modification; protein lipoylation via endogenous pathway; protein N(6)-(lipoyl)lysine from octanoyl-[acyl-carrier-protein]: step 2/2. Catalyzes the radical-mediated insertion of two sulfur atoms into the C-6 and C-8 positions of the octanoyl moiety bound to the lipoyl domains of lipoate-dependent enzymes, thereby converting the octanoylated domains into lipoylated derivatives. This Leishmania braziliensis protein is Lipoyl synthase, mitochondrial.